The following is a 179-amino-acid chain: Signal peptidase complex catalytic subunit SEC11A (179 aa).

Residues 1 to 16 (MLSLDFLDDVRRMNKR) lie on the Cytoplasmic side of the membrane. Residues 17 to 36 (QLYYQVLNFGMIVSSALMIW) traverse the membrane as a helical; Signal-anchor for type II membrane protein segment. Over 37 to 179 (KGLMVITGSE…LGLFVLVHRE (143 aa)) the chain is Lumenal. Catalysis depends on charge relay system residues S56, H96, and D122. The tract at residues 165 to 176 (AVLFLLGLFVLV) is C-terminal short (CTS) helix.

Belongs to the peptidase S26B family. As to quaternary structure, component of the signal peptidase complex paralog A (SPC-A) composed of a catalytic subunit SEC11A and three accessory subunits SPCS1, SPCS2 and SPCS3. Within the complex, interacts with SPCS2 and SPCS3. The complex induces a local thinning of the ER membrane which is used to measure the length of the signal peptide (SP) h-region of protein substrates. This ensures the selectivity of the complex towards h-regions shorter than 18-20 amino acids.

It is found in the endoplasmic reticulum membrane. It carries out the reaction Cleavage of hydrophobic, N-terminal signal or leader sequences from secreted and periplasmic proteins.. Functionally, catalytic component of the signal peptidase complex (SPC) which catalyzes the cleavage of N-terminal signal sequences from nascent proteins as they are translocated into the lumen of the endoplasmic reticulum. Specifically cleaves N-terminal signal peptides that contain a hydrophobic alpha-helix (h-region) shorter than 18-20 amino acids. This Bos taurus (Bovine) protein is Signal peptidase complex catalytic subunit SEC11A (SEC11A).